Here is a 54-residue protein sequence, read N- to C-terminus: Potassium channel toxin alpha-KTx 14.x (54 aa).

The N-terminal stretch at 1–23 is a signal peptide; sequence MKIFFAILLILAVCSMAIWTVNG. Intrachain disulfides connect C30–C46, C36–C51, and C40–C53.

The protein belongs to the short scorpion toxin superfamily. Potassium channel inhibitor family. Alpha-KTx 14 subfamily. As to expression, expressed by the venom gland.

It localises to the secreted. In terms of biological role, potassium channels inhibitor. This chain is Potassium channel toxin alpha-KTx 14.x, found in Olivierus martensii (Manchurian scorpion).